Consider the following 270-residue polypeptide: Large ribosomal subunit protein bL21m (270 aa).

Residues 1 to 68 (MASLRCFREL…HWYRSQDRCF (68 aa)) constitute a mitochondrion transit peptide. The segment at 68-113 (FSSNTKDTDEDEESSEGEDDDEEEGEDFEDSADMEVEREYSPAEKV) is disordered. Positions 75-101 (TDEDEESSEGEDDDEEEGEDFEDSADM) are enriched in acidic residues. Positions 102–113 (EVEREYSPAEKV) are enriched in basic and acidic residues.

The protein belongs to the bacterial ribosomal protein bL21 family. In terms of assembly, component of the mitochondrial ribosome large subunit. In terms of tissue distribution, constitutively expressed in roots, stems, leaves, flowers, pistils and siliques.

It localises to the mitochondrion. This protein binds to 23S ribosomal RNA in the presence of protein L20. Required for karyogamy during female gametophyte development, when the two polar nuclei fuse to form the diploid central cell nucleus, and during double fertilization of the egg cell and the central cell. This chain is Large ribosomal subunit protein bL21m, found in Arabidopsis thaliana (Mouse-ear cress).